A 369-amino-acid polypeptide reads, in one-letter code: Choline-phosphate cytidylyltransferase B (369 aa).

A disordered region spans residues 1-27; it reads MPVLTTDAESETGIPKSLSNEPPSETM. CTP is bound by residues isoleucine 84, phenylalanine 85, histidine 92, and lysine 122. Phosphocholine is bound by residues lysine 122 and tryptophan 151. Positions 168, 169, 173, 195, 196, 197, and 200 each coordinate CTP. Residues 309 to 369 are disordered; sequence RMLQALSPKQ…SMSEGDEDEK (61 aa). Phosphoserine is present on residues serine 315, serine 319, serine 322, serine 323, serine 329, serine 331, and serine 335. Residues 319–339 show a composition bias toward low complexity; that stretch reads SPVSSPTRSRSPSRSPSPTFS. The residue at position 345 (threonine 345) is a Phosphothreonine. Residues serine 346, serine 349, serine 350, serine 355, serine 360, and serine 362 each carry the phosphoserine modification. Low complexity predominate over residues 351–362; sequence PKAASASISSMS.

The protein belongs to the cytidylyltransferase family. In terms of assembly, homodimer. In terms of tissue distribution, highly expressed in brain (at protein level). Expressed in liver (at protein level). Expressed at lower levels in lung and gonads. Expressed in brain (at protein level). Expressed at lower levels in lung and gonads.

It localises to the endoplasmic reticulum. The protein localises to the cytoplasm. It catalyses the reaction phosphocholine + CTP + H(+) = CDP-choline + diphosphate. It functions in the pathway phospholipid metabolism; phosphatidylcholine biosynthesis; phosphatidylcholine from phosphocholine: step 1/2. Catalyzes the key rate-limiting step in the CDP-choline pathway for phosphatidylcholine biosynthesis. Plays an important role in ovary maturation and the maintenance of sperm production. Its function is as follows. Catalyzes the key rate-limiting step in the CDP-choline pathway for phosphatidylcholine biosynthesis. The chain is Choline-phosphate cytidylyltransferase B (Pcyt1b) from Mus musculus (Mouse).